The primary structure comprises 242 residues: Protein unc-119 homolog B-A (242 aa).

A compositionally biased stretch (basic and acidic residues) spans 1 to 20; it reads MSGSKREAALTGQPKDERKK. The disordered stretch occupies residues 1–49; the sequence is MSGSKREAALTGQPKDERKKSGGGVINRLKARRVQGKESGTSDQSSVTP. The segment covering 38–48 has biased composition (polar residues); sequence ESGTSDQSSVT. Y133 is a binding site for tetradecanoate.

This sequence belongs to the PDE6D/unc-119 family.

Its function is as follows. Myristoyl-binding protein that acts as a cargo adapter: specifically binds the myristoyl moiety of a subset of N-terminally myristoylated proteins and is required for their localization. Plays a key role in localization of proteins to the primary cilium membrane. The polypeptide is Protein unc-119 homolog B-A (unc119b-a) (Xenopus laevis (African clawed frog)).